The primary structure comprises 341 residues: UDP-3-O-acylglucosamine N-acyltransferase (341 aa).

Histidine 241 acts as the Proton acceptor in catalysis.

The protein belongs to the transferase hexapeptide repeat family. LpxD subfamily. In terms of assembly, homotrimer.

The catalysed reaction is a UDP-3-O-[(3R)-3-hydroxyacyl]-alpha-D-glucosamine + a (3R)-hydroxyacyl-[ACP] = a UDP-2-N,3-O-bis[(3R)-3-hydroxyacyl]-alpha-D-glucosamine + holo-[ACP] + H(+). It functions in the pathway bacterial outer membrane biogenesis; LPS lipid A biosynthesis. Its function is as follows. Catalyzes the N-acylation of UDP-3-O-acylglucosamine using 3-hydroxyacyl-ACP as the acyl donor. Is involved in the biosynthesis of lipid A, a phosphorylated glycolipid that anchors the lipopolysaccharide to the outer membrane of the cell. The polypeptide is UDP-3-O-acylglucosamine N-acyltransferase (Haemophilus ducreyi (strain 35000HP / ATCC 700724)).